Here is a 275-residue protein sequence, read N- to C-terminus: Sulfate transporter CysZ (275 aa).

The disordered stretch occupies residues 1 to 24 (MSSEKSSFPEKPPSFEKPSHSNTA). A compositionally biased stretch (basic and acidic residues) spans 13 to 24 (PSFEKPSHSNTA). 4 helical membrane passes run 49–69 (FVIL…WWLF), 93–113 (LIWP…FSTI), 169–189 (IVLL…PVLW), and 232–252 (ALVS…PVAV).

The protein belongs to the CysZ family.

The protein localises to the cell inner membrane. High affinity, high specificity proton-dependent sulfate transporter, which mediates sulfate uptake. Provides the sulfur source for the cysteine synthesis pathway. The polypeptide is Sulfate transporter CysZ (Pectobacterium atrosepticum (strain SCRI 1043 / ATCC BAA-672) (Erwinia carotovora subsp. atroseptica)).